The sequence spans 864 residues: Alanine--tRNA ligase (864 aa).

Residues His-534, His-538, Cys-639, and His-643 each coordinate Zn(2+).

Belongs to the class-II aminoacyl-tRNA synthetase family. Zn(2+) is required as a cofactor.

It localises to the cytoplasm. The enzyme catalyses tRNA(Ala) + L-alanine + ATP = L-alanyl-tRNA(Ala) + AMP + diphosphate. Its function is as follows. Catalyzes the attachment of alanine to tRNA(Ala) in a two-step reaction: alanine is first activated by ATP to form Ala-AMP and then transferred to the acceptor end of tRNA(Ala). Also edits incorrectly charged Ser-tRNA(Ala) and Gly-tRNA(Ala) via its editing domain. The chain is Alanine--tRNA ligase from Onion yellows phytoplasma (strain OY-M).